A 55-amino-acid polypeptide reads, in one-letter code: Cytochrome c oxidase subunit 7s (55 aa).

The helical transmembrane segment at 13–35 (LVQDIGVALILGSIAGCFFKYGV) threads the bilayer.

As to quaternary structure, slime mold cytochrome c oxidase consists of at least seven different polypeptides species, subunits I, II, III, IV, V, VI, and VIIe/s in order of MW.

It is found in the mitochondrion inner membrane. The enzyme catalyses 4 Fe(II)-[cytochrome c] + O2 + 8 H(+)(in) = 4 Fe(III)-[cytochrome c] + 2 H2O + 4 H(+)(out). Its function is as follows. This protein is one of the nuclear-coded polypeptide chains of cytochrome c oxidase, the terminal oxidase in mitochondrial electron transport. In Dictyostelium discoideum (Social amoeba), this protein is Cytochrome c oxidase subunit 7s (cxgS).